Consider the following 423-residue polypeptide: G protein-activated inward rectifier potassium channel 2 (423 aa).

The Cytoplasmic segment spans residues 1 to 89 (MAKLTESMTN…IFTTLVDLKW (89 aa)). Ser16 and Ser23 each carry phosphoserine. A helical transmembrane segment spans residues 90–114 (RFNLLIFVMVYTVTWLFFGMIWWLI). At 115 to 138 (AYIRGDMDHIEDPSWTPCVTNLNG) the chain is on the extracellular side. Residues 139 to 150 (FVSAFLFSIETE) constitute an intramembrane region (helical; Pore-forming). The pore-forming intramembrane region spans 151-157 (TTIGYGY). The short motif at 152-157 (TIGYGY) is the Selectivity filter element. The Extracellular portion of the chain corresponds to 158–166 (RVITDKCPE). The chain crosses the membrane as a helical span at residues 167 to 188 (GIILLLIQSVLGSIVNAFMVGC). Topologically, residues 189–423 (MFVKISQPKK…VANLENESKV (235 aa)) are cytoplasmic. Positions 390–423 (NQHAELETEEEEKNLEEQTERNGDVANLENESKV) are disordered. Residues 420–423 (ESKV) carry the PDZ-binding motif.

It belongs to the inward rectifier-type potassium channel (TC 1.A.2.1) family. KCNJ6 subfamily. In terms of assembly, associates with KCNJ3/GIRK1 or KCNJ5/GRIK4 to form a G-protein-activated heteromultimer pore-forming unit. The resulting inward current is much larger. Interacts (via PDZ-binding motif) with SNX27 (via PDZ domain); the interaction is required when endocytosed to prevent degradation in lysosomes and promote recycling to the plasma membrane.

The protein localises to the membrane. The catalysed reaction is K(+)(in) = K(+)(out). Its activity is regulated as follows. Activated by phosphatidylinositol 4,5 biphosphate (PtdIns(4,5)P2). Functionally, inward rectifier potassium channels are characterized by a greater tendency to allow potassium to flow into the cell rather than out of it. Their voltage dependence is regulated by the concentration of extracellular potassium; as external potassium is raised, the voltage range of the channel opening shifts to more positive voltages. The inward rectification is mainly due to the blockage of outward current by internal magnesium. This potassium channel may be involved in the regulation of insulin secretion by glucose and/or neurotransmitters acting through G-protein-coupled receptors. The polypeptide is G protein-activated inward rectifier potassium channel 2 (KCNJ6) (Pongo abelii (Sumatran orangutan)).